The following is a 453-amino-acid chain: BPI fold-containing family B member 6 (453 aa).

The first 18 residues, 1 to 18, serve as a signal peptide directing secretion; that stretch reads MLRILCLALCSLLTGTRA. An N-linked (GlcNAc...) asparagine glycan is attached at Asn114. Cys137 and Cys174 are oxidised to a cystine. An N-linked (GlcNAc...) asparagine glycan is attached at Asn190.

This sequence belongs to the BPI/LBP/Plunc superfamily. BPI/LBP family. In terms of tissue distribution, detected at very low levels in normal tonsils, and at higher levels in hypertrophic tonsils.

It localises to the secreted. The polypeptide is BPI fold-containing family B member 6 (BPIFB6) (Homo sapiens (Human)).